We begin with the raw amino-acid sequence, 730 residues long: Replication restart protein PriA (730 aa).

A Helicase ATP-binding domain is found at 212–378 (LLFHSGFNVW…QNGKYQHLVL (167 aa)). An ATP-binding site is contributed by 225–232 (GVTGSGKT). The short motif at 321-324 (DEEH) is the DEAH box element. Zn(2+) is bound by residues Cys437, Cys440, Cys446, Cys449, Cys464, Cys467, Cys477, and Cys480. A Helicase C-terminal domain is found at 472 to 640 (TIPRQCGDCG…LPPFTFQALI (169 aa)).

Belongs to the helicase family. PriA subfamily. As to quaternary structure, component of the replication restart primosome. Zn(2+) serves as cofactor.

It carries out the reaction Couples ATP hydrolysis with the unwinding of duplex DNA by translocating in the 3'-5' direction.. The enzyme catalyses ATP + H2O = ADP + phosphate + H(+). Initiates the restart of stalled replication forks, which reloads the replicative helicase on sites other than the origin of replication. Recognizes and binds to abandoned replication forks and remodels them to uncover a helicase loading site. Promotes assembly of the primosome at these replication forks. The sequence is that of Replication restart protein PriA from Haemophilus influenzae (strain ATCC 51907 / DSM 11121 / KW20 / Rd).